The sequence spans 643 residues: Pseudouridylate synthase PUS7L (643 aa).

Asp284 (nucleophile) is an active-site residue. Positions 370 to 597 (GFVNYYGPQR…PGCYRPLLAK (228 aa)) constitute a TRUD domain.

The protein belongs to the pseudouridine synthase TruD family.

It carries out the reaction a uridine in mRNA = a pseudouridine in mRNA. Pseudouridine synthase that catalyzes pseudouridylation of mRNAs. The sequence is that of Pseudouridylate synthase PUS7L (pus7l) from Danio rerio (Zebrafish).